Here is a 275-residue protein sequence, read N- to C-terminus: MVKRMHCNINLKYGVIMKKDCYTLRISLKPGFINAEQLKAIAYVIENFGDNKAHITTRQGIEFKISPEHLEEVEKILNNVGLNLGSTGNRVRQVVSCIGLECYNAIGDSVSLARRIHEEFEGVWVPRKVKINVSGCPNSCTFHRFCDIGICYRYKITINKEICTNCGKCKDFCDLNAIDWERKIIKDNCTGEGKCTGLCNAFKAERVISIFVGGKGGRIYKEGKHLIDLKNEDDVLFVIDELISLYAKFGKGRMADFVENYGIENLRNNIKELIK.

[4Fe-4S] cluster contacts are provided by cysteine 97, cysteine 102, cysteine 136, and cysteine 140. Siroheme is bound at residue cysteine 140.

The protein belongs to the nitrite and sulfite reductase 4Fe-4S domain family.

This is an uncharacterized protein from Methanocaldococcus jannaschii (strain ATCC 43067 / DSM 2661 / JAL-1 / JCM 10045 / NBRC 100440) (Methanococcus jannaschii).